A 193-amino-acid chain; its full sequence is MKKNLITSVLMTVVTTVLLGLVYPLLITGLAQVFFKDKANGQIISANGHAIGSRIIGQPFTGPAYFHSRPSAAGNGYDASNSGGTNLGPTNQKLVDRVKQDVSALQPEANGKPIPVDMITTSASGLDPHVTPANAEFQVARVARERGMSETQLRQLVARHTEGRQVGFLGEPRVNVLELNLDLDGTQPMPTPR.

A helical membrane pass occupies residues 9 to 29 (VLMTVVTTVLLGLVYPLLITG).

It belongs to the KdpC family. In terms of assembly, the system is composed of three essential subunits: KdpA, KdpB and KdpC.

It is found in the cell inner membrane. Its function is as follows. Part of the high-affinity ATP-driven potassium transport (or Kdp) system, which catalyzes the hydrolysis of ATP coupled with the electrogenic transport of potassium into the cytoplasm. This subunit acts as a catalytic chaperone that increases the ATP-binding affinity of the ATP-hydrolyzing subunit KdpB by the formation of a transient KdpB/KdpC/ATP ternary complex. In Koribacter versatilis (strain Ellin345), this protein is Potassium-transporting ATPase KdpC subunit.